A 1003-amino-acid polypeptide reads, in one-letter code: Translation initiation factor IF-2 (1003 aa).

Basic and acidic residues-rich tracts occupy residues 61-74, 139-169, 180-206, 219-229, and 252-290; these read EKFS…DRNK, PVVE…KKPE, LEEK…KETP, VFKIRPTEFKS, and SKEE…DKIS. Disordered stretches follow at residues 61–81 and 135–362; these read EKFS…SIEG and PKAE…KDRF. A compositionally biased stretch (low complexity) spans 315-350; it reads NAAGTTNAGGASNNNQRNDNANRPNRNNNSKPNGNN. The tr-type G domain maps to 502–672; sequence PRAPIVTVMG…LLEAEMLDLK (171 aa). A G1 region spans residues 511 to 518; the sequence is GHVDHGKT. 511-518 contributes to the GTP binding site; sequence GHVDHGKT. The interval 536-540 is G2; sequence GITQH. Residues 558 to 561 form a G3 region; it reads DTPG. GTP-binding positions include 558–562 and 612–615; these read DTPGH and NKVD. The segment at 612–615 is G4; the sequence is NKVD. Residues 648–650 form a G5 region; that stretch reads SAK.

Belongs to the TRAFAC class translation factor GTPase superfamily. Classic translation factor GTPase family. IF-2 subfamily.

Its subcellular location is the cytoplasm. One of the essential components for the initiation of protein synthesis. Protects formylmethionyl-tRNA from spontaneous hydrolysis and promotes its binding to the 30S ribosomal subunits. Also involved in the hydrolysis of GTP during the formation of the 70S ribosomal complex. The chain is Translation initiation factor IF-2 from Phocaeicola vulgatus (strain ATCC 8482 / DSM 1447 / JCM 5826 / CCUG 4940 / NBRC 14291 / NCTC 11154) (Bacteroides vulgatus).